A 179-amino-acid chain; its full sequence is ATP synthase subunit delta (179 aa).

It belongs to the ATPase delta chain family. In terms of assembly, F-type ATPases have 2 components, F(1) - the catalytic core - and F(0) - the membrane proton channel. F(1) has five subunits: alpha(3), beta(3), gamma(1), delta(1), epsilon(1). F(0) has three main subunits: a(1), b(2) and c(10-14). The alpha and beta chains form an alternating ring which encloses part of the gamma chain. F(1) is attached to F(0) by a central stalk formed by the gamma and epsilon chains, while a peripheral stalk is formed by the delta and b chains.

It localises to the cell membrane. Functionally, f(1)F(0) ATP synthase produces ATP from ADP in the presence of a proton or sodium gradient. F-type ATPases consist of two structural domains, F(1) containing the extramembraneous catalytic core and F(0) containing the membrane proton channel, linked together by a central stalk and a peripheral stalk. During catalysis, ATP synthesis in the catalytic domain of F(1) is coupled via a rotary mechanism of the central stalk subunits to proton translocation. This protein is part of the stalk that links CF(0) to CF(1). It either transmits conformational changes from CF(0) to CF(1) or is implicated in proton conduction. The sequence is that of ATP synthase subunit delta from Staphylococcus epidermidis (strain ATCC 35984 / DSM 28319 / BCRC 17069 / CCUG 31568 / BM 3577 / RP62A).